The chain runs to 503 residues: Glucosaminyl-phosphatidylinositol-acyltransferase PIGW (503 aa).

At 1-21 the chain is on the lumenal side; that stretch reads MSQKQLKEAFVRNLSGTSVLE. The N-linked (GlcNAc...) asparagine glycan is linked to N13. A helical transmembrane segment spans residues 22-42; sequence VTQGLCFPAFCILCRGLWIIF. Over 43–48 the chain is Cytoplasmic; sequence SQHVCS. A helical membrane pass occupies residues 49 to 71; that stretch reads FSNTWSTRFLMDFVVLIVPLVIT. Over 72 to 74 the chain is Lumenal; the sequence is LTV. Residues 75–97 traverse the membrane as a helical segment; that stretch reads LSSFILLENLTVIVWGAWLLYQI. Residues 98–131 are Cytoplasmic-facing; that stretch reads YHRRTCYAKVPVQKVFANFLKISLESEYNPAITC. Residues 132–152 traverse the membrane as a helical segment; that stretch reads YRVINSVFTAIAILAVDFPLF. At 153-160 the chain is on the lumenal side; the sequence is PRRFAKTE. The chain crosses the membrane as a helical span at residues 161-181; that stretch reads LYGTGAMDFGVGGFIFGAAMV. At 182-201 the chain is on the cytoplasmic side; the sequence is CPEVRRKSIEESRFNYLRKS. A helical transmembrane segment spans residues 202–222; sequence LYSVWPLVFLGMGRLVIIKSI. Topologically, residues 223–236 are lumenal; that stretch reads GYQEHSTEYGIHWN. A helical transmembrane segment spans residues 237 to 257; that stretch reads FFFTIIVVRLVTSLLLIIFPL. The Cytoplasmic portion of the chain corresponds to 258–259; it reads NK. A helical membrane pass occupies residues 260-280; it reads SWIVAVSITVVYQLALDYTPL. Residues 281 to 304 lie on the Lumenal side of the membrane; it reads KRILLYGTDGSGTRVGFLNANREG. The chain crosses the membrane as a helical span at residues 305–325; the sequence is IISTLGYVTIHMAGVQTGLYV. Topologically, residues 326–339 are cytoplasmic; the sequence is LKGRAQVRDWIKAT. Residues 340–360 form a helical membrane-spanning segment; it reads CWVFSVAVGFFISLHIVQVNI. The Lumenal portion of the chain corresponds to 361–380; the sequence is EAVSRRMANLAFCLWVVASS. Residues 381–401 traverse the membrane as a helical segment; the sequence is LMLLSCLLLSGIILSFAQFLI. Residues 402-447 lie on the Cytoplasmic side of the membrane; it reads KGSLVPCSWKLIQSPTTHKNHSESLILEAEKNQPSLCLITALNRNQ. S415 carries the post-translational modification Phosphoserine. The helical transmembrane segment at 448–468 threads the bilayer; sequence LFFFLLSNITTGLINLTMDTL. Topologically, residues 469 to 472 are lumenal; sequence HTGA. The helical transmembrane segment at 473–493 threads the bilayer; the sequence is LWTLVVLSIYMFTNCLVIYVL. The Cytoplasmic portion of the chain corresponds to 494-503; sequence DLQGKTIKFW.

This sequence belongs to the PIGW family.

It is found in the endoplasmic reticulum membrane. The protein operates within glycolipid biosynthesis; glycosylphosphatidylinositol-anchor biosynthesis. Acyltransferase that catalyzes the acyl transfer from an acyl-CoA at the 2-OH position of the inositol ring of glucosaminyl phosphatidylinositol (GlcN-PI) to generate GlcN-(acyl)PI and participates in the fourth step of GPI-anchor biosynthesi. Required for the transport of GPI-anchored proteins to the plasma membrane. Acetylation during GPI-anchor biosynthesis is not essential for the subsequent mannosylation and is usually removed soon after the attachment of GPIs to proteins. The protein is Glucosaminyl-phosphatidylinositol-acyltransferase PIGW of Mus musculus (Mouse).